A 762-amino-acid polypeptide reads, in one-letter code: Probable inorganic carbon transporter subunit DabA (762 aa).

Zn(2+) contacts are provided by cysteine 279, aspartate 281, histidine 461, and cysteine 476.

Belongs to the inorganic carbon transporter (TC 9.A.2) DabA family. As to quaternary structure, forms a complex with DabB. Zn(2+) is required as a cofactor.

It is found in the cell inner membrane. In terms of biological role, part of an energy-coupled inorganic carbon pump. This Legionella pneumophila (strain Lens) protein is Probable inorganic carbon transporter subunit DabA.